Here is a 267-residue protein sequence, read N- to C-terminus: MSVAAGGPAGAAIPESRLMALGILGGLAGIYASAVNPVIGPVLASLGAVCAIVWGADAIRRVASYGLGTGVPSIGYMSVSIGIVGVVAGLASVFVVPAIAVPVVALILAMILGVVVAVLGKKIVKMKIPILEKCTAEISGAAALSVLGFSAAIAGSYTLQTMLTSVITTGFIGLLFILNTMAIQHPFNACLGPNENQTRTLKLAASTGFISMAIVGLLGIGLNPSWWLVSLIGALCWIVAFRAFVSASFEEAASVKWSGLWPKEEEH.

The next 8 membrane-spanning stretches (helical) occupy residues L18–V38, I39–I59, Y76–V96, I99–L119, I138–T158, L163–I183, F209–V229, and S230–E250.

The protein belongs to the MtrC family. As to quaternary structure, the complex is composed of 8 subunits; MtrA, MtrB, MtrC, MtrD, MtrE, MtrF, MtrG and MtrH.

The protein resides in the cell membrane. The catalysed reaction is 5-methyl-5,6,7,8-tetrahydromethanopterin + coenzyme M + 2 Na(+)(in) = 5,6,7,8-tetrahydromethanopterin + methyl-coenzyme M + 2 Na(+)(out). Its pathway is one-carbon metabolism; methanogenesis from CO(2); methyl-coenzyme M from 5,10-methylene-5,6,7,8-tetrahydromethanopterin: step 2/2. In terms of biological role, part of a complex that catalyzes the formation of methyl-coenzyme M and tetrahydromethanopterin from coenzyme M and methyl-tetrahydromethanopterin. This is an energy-conserving, sodium-ion translocating step. This chain is Tetrahydromethanopterin S-methyltransferase subunit C, found in Methanothermobacter marburgensis (strain ATCC BAA-927 / DSM 2133 / JCM 14651 / NBRC 100331 / OCM 82 / Marburg) (Methanobacterium thermoautotrophicum).